The chain runs to 172 residues: R-phycocyanin beta subunit (172 aa).

N4-methylasparagine is present on Asn72. Position 82 (Cys82) interacts with (2R,3E)-phycocyanobilin. Cys153 contacts (2R,3E)-phycoerythrobilin.

It belongs to the phycobiliprotein family. In terms of assembly, heterodimer of an alpha and a beta subunit, which further assembles into trimers and the trimers into hexamers. In terms of processing, contains two covalently linked bilin chromophores.

Its subcellular location is the cellular thylakoid membrane. Light-harvesting photosynthetic bile pigment-protein from the phycobiliprotein complex (phycobilisome, PBS). Phycocyanin is the major phycobiliprotein in the PBS rod. The chain is R-phycocyanin beta subunit (rpcB) from Synechococcus sp. (strain WH7803).